A 61-amino-acid polypeptide reads, in one-letter code: Conotoxin 3 (61 aa).

Residues 1 to 21 form the signal peptide; sequence MRCLPVFVILLLLIASVPSDA. Positions 22–48 are excised as a propeptide; the sequence is VQLKTKDDMPLPSFNGNARRTPRMLSN. Trp58 bears the 6'-bromotryptophan mark.

This sequence belongs to the conotoxin T superfamily. In terms of processing, contains 2 disulfide bonds that can be either 'C1-C3, C2-C4' or 'C1-C4, C2-C3', since these disulfide connectivities have been observed for conotoxins with cysteine framework V (for examples, see AC P0DQQ7 and AC P81755). Post-translationally, contains 2 disulfide bonds. As to expression, expressed by the venom duct.

Its subcellular location is the secreted. The chain is Conotoxin 3 from Conus textile (Cloth-of-gold cone).